The chain runs to 151 residues: Deoxyuridine 5'-triphosphate nucleotidohydrolase (151 aa).

Substrate-binding positions include 70 to 72 (RSG), Asn83, 87 to 89 (LID), and Met97.

This sequence belongs to the dUTPase family. It depends on Mg(2+) as a cofactor.

It catalyses the reaction dUTP + H2O = dUMP + diphosphate + H(+). Its pathway is pyrimidine metabolism; dUMP biosynthesis; dUMP from dCTP (dUTP route): step 2/2. Its function is as follows. This enzyme is involved in nucleotide metabolism: it produces dUMP, the immediate precursor of thymidine nucleotides and it decreases the intracellular concentration of dUTP so that uracil cannot be incorporated into DNA. This Pseudomonas putida (strain W619) protein is Deoxyuridine 5'-triphosphate nucleotidohydrolase.